Consider the following 141-residue polypeptide: Hemoglobin subunit alpha (141 aa).

The 141-residue stretch at 1 to 141 folds into the Globin domain; sequence VLSPADKTNV…VSTVLTSKYR (141 aa). Position 3 is a phosphoserine (serine 3). Lysine 7 is subject to N6-succinyllysine. Threonine 8 carries the phosphothreonine modification. Position 11 is an N6-succinyllysine (lysine 11). The residue at position 16 (lysine 16) is an N6-acetyllysine; alternate. Lysine 16 carries the N6-succinyllysine; alternate modification. Position 24 is a phosphotyrosine (tyrosine 24). At serine 35 the chain carries Phosphoserine. N6-succinyllysine is present on lysine 40. Serine 49 carries the phosphoserine modification. Residue histidine 58 coordinates O2. Histidine 87 is a heme b binding site. Phosphoserine is present on serine 102. Threonine 108 is modified (phosphothreonine). 2 positions are modified to phosphoserine: serine 124 and serine 131. 2 positions are modified to phosphothreonine: threonine 134 and threonine 137. A Phosphoserine modification is found at serine 138.

Belongs to the globin family. Heterotetramer of two alpha chains and two beta chains. As to expression, red blood cells.

Involved in oxygen transport from the lung to the various peripheral tissues. Its function is as follows. Hemopressin acts as an antagonist peptide of the cannabinoid receptor CNR1. Hemopressin-binding efficiently blocks cannabinoid receptor CNR1 and subsequent signaling. In Taphozous georgianus (Sharp-nosed tomb bat), this protein is Hemoglobin subunit alpha (HBA).